Here is a 78-residue protein sequence, read N- to C-terminus: Acyl carrier protein AcpP (78 aa).

In terms of domain architecture, Carrier spans 2–77 (SDIAERVKKI…DAVKFIEKAQ (76 aa)). Position 37 is an O-(pantetheine 4'-phosphoryl)serine (S37).

This sequence belongs to the acyl carrier protein (ACP) family. In terms of processing, 4'-phosphopantetheine is transferred from CoA to a specific serine of apo-ACP by AcpS. This modification is essential for activity because fatty acids are bound in thioester linkage to the sulfhydryl of the prosthetic group.

Its subcellular location is the cytoplasm. It functions in the pathway lipid metabolism; fatty acid biosynthesis. Carrier of the growing fatty acid chain in fatty acid biosynthesis. The protein is Acyl carrier protein AcpP of Agrobacterium fabrum (strain C58 / ATCC 33970) (Agrobacterium tumefaciens (strain C58)).